The sequence spans 259 residues: Protein odd-skipped-related 1 (259 aa).

C2H2-type zinc fingers lie at residues 168 to 190 (FVCK…ERTH), 196 to 218 (YTCD…RYIH), and 224 to 246 (FKCQ…KTLH).

Belongs to the Odd C2H2-type zinc-finger protein family.

The protein localises to the nucleus. In terms of biological role, transcriptional repressor. Required for pronephric kidney development. This Xenopus tropicalis (Western clawed frog) protein is Protein odd-skipped-related 1.